The primary structure comprises 142 residues: Potassium voltage-gated channel subfamily E regulatory beta subunit 5 (142 aa).

Residues N2 and N25 are each glycosylated (N-linked (GlcNAc...) asparagine). Residues 61 to 81 form a helical membrane-spanning segment; the sequence is LYILLIMIFYACLAGGLILAY. Residues 82-142 lie on the Cytoplasmic side of the membrane; that stretch reads TRSRKLVEAK…PALAQGAERV (61 aa). Positions 119-142 are disordered; it reads SQAEGRRQLASEGLPALAQGAERV.

Belongs to the potassium channel KCNE family. Interacts with KCNQ1; impairs KCNQ1 localization in lipid rafts and only conducts current upon strong and continued depolarization. As to expression, highly expressed in heart, skeletal muscle, brain, spinal cord and placenta.

It localises to the membrane. Its function is as follows. Potassium channel ancillary subunit that is essential for generation of some native K(+) currents by virtue of formation of heteromeric ion channel complex with voltage-gated potassium (Kv) channel pore-forming alpha subunits. Functions as an inhibitory beta-subunit of the repolarizing cardiac potassium ion channel KCNQ1. This is Potassium voltage-gated channel subfamily E regulatory beta subunit 5 (KCNE5) from Homo sapiens (Human).